The primary structure comprises 1446 residues: DNA-directed RNA polymerase subunit beta'' (1446 aa).

Zn(2+) is bound by residues cysteine 217, cysteine 285, cysteine 292, and cysteine 295.

This sequence belongs to the RNA polymerase beta' chain family. RpoC2 subfamily. In terms of assembly, in plastids the minimal PEP RNA polymerase catalytic core is composed of four subunits: alpha, beta, beta', and beta''. When a (nuclear-encoded) sigma factor is associated with the core the holoenzyme is formed, which can initiate transcription. It depends on Zn(2+) as a cofactor.

The protein resides in the plastid. It localises to the chloroplast. The enzyme catalyses RNA(n) + a ribonucleoside 5'-triphosphate = RNA(n+1) + diphosphate. In terms of biological role, DNA-dependent RNA polymerase catalyzes the transcription of DNA into RNA using the four ribonucleoside triphosphates as substrates. In Thalassiosira pseudonana (Marine diatom), this protein is DNA-directed RNA polymerase subunit beta''.